The following is a 266-amino-acid chain: Glucose 1-dehydrogenase (266 aa).

15 to 39 (LVTGASQGIGEATALRFAEEGAQVA) is a binding site for NADP(+). Position 149 (Ser-149) interacts with substrate. Tyr-162 serves as the catalytic Proton acceptor.

This sequence belongs to the short-chain dehydrogenases/reductases (SDR) family. As to quaternary structure, homotetramer or homooctamer.

It carries out the reaction D-glucose + NADP(+) = D-glucono-1,5-lactone + NADPH + H(+). Its function is as follows. Oxidizes both D-glucose and D-mannose, but is 15 times more catalytically efficient with mannose. Strictly dependent on NADP. The protein is Glucose 1-dehydrogenase of Gluconobacter oxydans (strain 621H) (Gluconobacter suboxydans).